The primary structure comprises 248 residues: Triosephosphate isomerase (248 aa).

Residues asparagine 11 and lysine 13 each coordinate substrate. Residue histidine 95 is the Electrophile of the active site. Glutamate 165 acts as the Proton acceptor in catalysis.

This sequence belongs to the triosephosphate isomerase family. Homodimer.

The protein localises to the cytoplasm. It carries out the reaction dihydroxyacetone phosphate = methylglyoxal + phosphate. It catalyses the reaction D-glyceraldehyde 3-phosphate = dihydroxyacetone phosphate. It functions in the pathway carbohydrate degradation; glycolysis; D-glyceraldehyde 3-phosphate from glycerone phosphate: step 1/1. The protein operates within carbohydrate biosynthesis; gluconeogenesis. Its function is as follows. Triosephosphate isomerase is an extremely efficient metabolic enzyme that catalyzes the interconversion between dihydroxyacetone phosphate (DHAP) and D-glyceraldehyde-3-phosphate (G3P) in glycolysis and gluconeogenesis. In terms of biological role, it is also responsible for the non-negligible production of methylglyoxal a reactive cytotoxic side-product that modifies and can alter proteins, DNA and lipids. The protein is Triosephosphate isomerase (TPI1) of Gallus gallus (Chicken).